The primary structure comprises 500 residues: Probable cytochrome P450 514A2 (500 aa).

A helical membrane pass occupies residues 4–24 (IYTIILTIIILVLIISIKDLF). Residue C446 participates in heme binding.

The protein belongs to the cytochrome P450 family. The cofactor is heme.

Its subcellular location is the membrane. This chain is Probable cytochrome P450 514A2 (cyp514A2), found in Dictyostelium discoideum (Social amoeba).